Consider the following 254-residue polypeptide: 5'-nucleotidase SurE (254 aa).

Asp8, Asp9, Ser40, and Asn93 together coordinate a divalent metal cation.

This sequence belongs to the SurE nucleotidase family. A divalent metal cation is required as a cofactor.

The protein localises to the cytoplasm. The catalysed reaction is a ribonucleoside 5'-phosphate + H2O = a ribonucleoside + phosphate. Nucleotidase that shows phosphatase activity on nucleoside 5'-monophosphates. This Actinobacillus pleuropneumoniae serotype 5b (strain L20) protein is 5'-nucleotidase SurE.